The following is a 635-amino-acid chain: Probable extracellular metalloproteinase 1 (635 aa).

The first 19 residues, 1-19 (MHGLLLAAGLLSLPLHVLA), serve as a signal peptide directing secretion. Positions 20–246 (HPQPSTSTSL…VHNVVDYVAH (227 aa)) are excised as a propeptide. The N-linked (GlcNAc...) asparagine glycan is linked to N287. Residue H430 coordinates Zn(2+). E431 is an active-site residue. H434 contributes to the Zn(2+) binding site. N-linked (GlcNAc...) asparagine glycans are attached at residues N475, N594, and N623.

This sequence belongs to the peptidase M36 family. Requires Zn(2+) as cofactor.

The protein resides in the secreted. Functionally, secreted metalloproteinase probably acting as a virulence factor. The protein is Probable extracellular metalloproteinase 1 (MEP1) of Trichophyton verrucosum (strain HKI 0517).